The following is a 284-amino-acid chain: Tropomyosin (284 aa).

A coiled-coil region spans residues 1–284 (MDAIKKKMQA…DMTFTELIGN (284 aa)).

The protein belongs to the tropomyosin family. In terms of assembly, homodimer.

In terms of biological role, tropomyosin, in association with the troponin complex, plays a central role in the calcium dependent regulation of muscle contraction. The sequence is that of Tropomyosin from Periplaneta fuliginosa (Smokybrown cockroach).